A 515-amino-acid chain; its full sequence is Cytochrome P450 monooxygenase nsrP (515 aa).

Residues 20-40 (FGTAAFLAVLLSALAFLSYTP) traverse the membrane as a helical segment. Asn84, Asn406, and Asn411 each carry an N-linked (GlcNAc...) asparagine glycan. Cys452 serves as a coordination point for heme.

The protein belongs to the cytochrome P450 family. Requires heme as cofactor.

The protein resides in the membrane. Its pathway is secondary metabolite biosynthesis. Its function is as follows. Cytochrome P450 monooxygenase; part of the gene cluster that mediates the biosynthesis of the tetrahydroxanthone dimer neosartorin, which exhibits antibacterial activity. The two different monomeric units appear to be synthesized by the same set of enzymes, among which the Baeyer-Villiger monooxygenase nsrF is the key enzyme for the divergence of the biosynthetic routes. The pathway begins with the synthesis of atrochrysone thioester by the polyketide synthase nsrB. The atrochrysone carboxyl ACP thioesterase nsrC then breaks the thioester bond and releases the atrochrysone carboxylic acid from AacuL. Atrochrysone carboxylic acid is decarboxylated by the decarboxylase nsrE, and oxidized by the anthrone oxygenase nsrD to yield emodin. Emodin is then reduced to emodin hydroquinone by the oxidoreductase nsrR. A-ring reduction by the short chain dehydrogenase nsrJ, dehydration by the scytalone dehydratase-like protein nsrI and probable spontaneous re-oxidation, results in overall deoxygenation to chrysophanol. The Baeyer-Villiger monooxygenase nsrF accepts chrysophanol as a substrate to insert one oxygen atom at two different positions to yield the precursors of both monomric units. NsrF is promiscuous/flexible in interacting with the 2 (non methylated and methylated) aromatic rings of chrysophanol, thus diverging the biosynthetic pathway at this point. After the hydrolysis of the lactones, methylesterification by the methyltransferase nsrG yields respectively moniliphenone and 2,2',6'-trihydroxy-4-methyl-6-methoxya-cyldiphenylmethanone. The next steps are the hydroxylation by the FAD-dependent monooxygenase nsrK, followed by isomerization by the monooxygenase nsrQ. The short chain dehydrogenase/reductase nsrO then catalyzes the C-5 ketoreduction to give the xanthone skeleton of blennolide C and 5-acetylblennolide A. The acetyltransferase nsrL has a strict substrate specificity and uses only blennolide A but not blennolide C to yield 5-acetylblennolide A as the single-acetylated product. In the final step of the biosynthesis, the heterodimerization of the 2 xanthones, blennolide C and 5-acetylblennolide A, is catalyzed by the cytochrome P450 monooxygenase nsrP. NsrP can utilize at least three different xanthones as its substrates to perform the dimerization reaction. The sequence is that of Cytochrome P450 monooxygenase nsrP from Aspergillus novofumigatus (strain IBT 16806).